A 461-amino-acid chain; its full sequence is Bifunctional protein GlmU (461 aa).

Positions 1 to 230 (MSKIHAVVLA…PEETLGVNDR (230 aa)) are pyrophosphorylase. UDP-N-acetyl-alpha-D-glucosamine contacts are provided by residues 9–12 (LAAG), Lys-23, Gln-73, 78–79 (GT), 101–103 (YGD), Gly-140, Glu-155, Asn-170, and Asn-228. Asp-103 contributes to the Mg(2+) binding site. Asn-228 contacts Mg(2+). Residues 231–251 (VQLSEAEAYMKKRIMTGHMRN) form a linker region. The tract at residues 252-461 (GVTIIDPTST…KMPRKGKKQS (210 aa)) is N-acetyltransferase. Positions 333 and 351 each coordinate UDP-N-acetyl-alpha-D-glucosamine. The active-site Proton acceptor is the His-363. 2 residues coordinate UDP-N-acetyl-alpha-D-glucosamine: Tyr-366 and Asn-377. Residues 386–387 (NY), Ala-423, and Arg-440 each bind acetyl-CoA.

The protein in the N-terminal section; belongs to the N-acetylglucosamine-1-phosphate uridyltransferase family. It in the C-terminal section; belongs to the transferase hexapeptide repeat family. In terms of assembly, homotrimer. Requires Mg(2+) as cofactor.

It is found in the cytoplasm. The catalysed reaction is alpha-D-glucosamine 1-phosphate + acetyl-CoA = N-acetyl-alpha-D-glucosamine 1-phosphate + CoA + H(+). It catalyses the reaction N-acetyl-alpha-D-glucosamine 1-phosphate + UTP + H(+) = UDP-N-acetyl-alpha-D-glucosamine + diphosphate. It participates in nucleotide-sugar biosynthesis; UDP-N-acetyl-alpha-D-glucosamine biosynthesis; N-acetyl-alpha-D-glucosamine 1-phosphate from alpha-D-glucosamine 6-phosphate (route II): step 2/2. The protein operates within nucleotide-sugar biosynthesis; UDP-N-acetyl-alpha-D-glucosamine biosynthesis; UDP-N-acetyl-alpha-D-glucosamine from N-acetyl-alpha-D-glucosamine 1-phosphate: step 1/1. It functions in the pathway bacterial outer membrane biogenesis; LPS lipid A biosynthesis. Catalyzes the last two sequential reactions in the de novo biosynthetic pathway for UDP-N-acetylglucosamine (UDP-GlcNAc). The C-terminal domain catalyzes the transfer of acetyl group from acetyl coenzyme A to glucosamine-1-phosphate (GlcN-1-P) to produce N-acetylglucosamine-1-phosphate (GlcNAc-1-P), which is converted into UDP-GlcNAc by the transfer of uridine 5-monophosphate (from uridine 5-triphosphate), a reaction catalyzed by the N-terminal domain. This is Bifunctional protein GlmU from Brevibacillus brevis (strain 47 / JCM 6285 / NBRC 100599).